The following is a 466-amino-acid chain: Ribulose bisphosphate carboxylase large chain (466 aa).

The residue at position 4 (lysine 4) is an N6,N6,N6-trimethyllysine. Substrate is bound by residues asparagine 113 and threonine 163. Lysine 165 acts as the Proton acceptor in catalysis. Lysine 167 lines the substrate pocket. Residues lysine 191, aspartate 193, and glutamate 194 each contribute to the Mg(2+) site. The residue at position 191 (lysine 191) is an N6-carboxylysine. Residue histidine 284 is the Proton acceptor of the active site. Arginine 285, histidine 317, and serine 369 together coordinate substrate.

It belongs to the RuBisCO large chain family. Type I subfamily. As to quaternary structure, heterohexadecamer of 8 large chains and 8 small chains; disulfide-linked. The disulfide link is formed within the large subunit homodimers. Mg(2+) is required as a cofactor. The disulfide bond which can form in the large chain dimeric partners within the hexadecamer appears to be associated with oxidative stress and protein turnover.

The protein localises to the plastid. Its subcellular location is the chloroplast. It carries out the reaction 2 (2R)-3-phosphoglycerate + 2 H(+) = D-ribulose 1,5-bisphosphate + CO2 + H2O. The catalysed reaction is D-ribulose 1,5-bisphosphate + O2 = 2-phosphoglycolate + (2R)-3-phosphoglycerate + 2 H(+). RuBisCO catalyzes two reactions: the carboxylation of D-ribulose 1,5-bisphosphate, the primary event in carbon dioxide fixation, as well as the oxidative fragmentation of the pentose substrate in the photorespiration process. Both reactions occur simultaneously and in competition at the same active site. The polypeptide is Ribulose bisphosphate carboxylase large chain (Aphelandra sinclairiana (Orange shrimp plant)).